We begin with the raw amino-acid sequence, 456 residues long: tRNA modification GTPase MnmE (456 aa).

(6S)-5-formyl-5,6,7,8-tetrahydrofolate-binding residues include arginine 23, glutamate 85, and arginine 124. A TrmE-type G domain is found at 220–376 (GVAVLIAGKP…LKESIFQTFI (157 aa)). Asparagine 230 serves as a coordination point for K(+). Residues 230–235 (NVGKSS), 249–255 (TSVPGTT), and 274–277 (DTAG) each bind GTP. Serine 234 lines the Mg(2+) pocket. 3 residues coordinate K(+): threonine 249, valine 251, and threonine 254. Threonine 255 contributes to the Mg(2+) binding site. Lysine 456 contacts (6S)-5-formyl-5,6,7,8-tetrahydrofolate.

Belongs to the TRAFAC class TrmE-Era-EngA-EngB-Septin-like GTPase superfamily. TrmE GTPase family. In terms of assembly, homodimer. Heterotetramer of two MnmE and two MnmG subunits. Requires K(+) as cofactor.

The protein resides in the cytoplasm. Functionally, exhibits a very high intrinsic GTPase hydrolysis rate. Involved in the addition of a carboxymethylaminomethyl (cmnm) group at the wobble position (U34) of certain tRNAs, forming tRNA-cmnm(5)s(2)U34. The chain is tRNA modification GTPase MnmE from Geobacter sulfurreducens (strain ATCC 51573 / DSM 12127 / PCA).